We begin with the raw amino-acid sequence, 452 residues long: Cobyrinate a,c-diamide synthase (452 aa).

One can recognise a GATase cobBQ-type domain in the interval 244-437 (KIAYAYDEAF…VHINLYTYKE (194 aa)). Cysteine 327 serves as the catalytic Nucleophile.

It belongs to the CobB/CbiA family. Mg(2+) is required as a cofactor.

The catalysed reaction is cob(II)yrinate + 2 L-glutamine + 2 ATP + 2 H2O = cob(II)yrinate a,c diamide + 2 L-glutamate + 2 ADP + 2 phosphate + 2 H(+). It participates in cofactor biosynthesis; adenosylcobalamin biosynthesis; cob(II)yrinate a,c-diamide from sirohydrochlorin (anaerobic route): step 10/10. In terms of biological role, catalyzes the ATP-dependent amidation of the two carboxylate groups at positions a and c of cobyrinate, using either L-glutamine or ammonia as the nitrogen source. In Caldanaerobacter subterraneus subsp. tengcongensis (strain DSM 15242 / JCM 11007 / NBRC 100824 / MB4) (Thermoanaerobacter tengcongensis), this protein is Cobyrinate a,c-diamide synthase.